Reading from the N-terminus, the 287-residue chain is Large ribosomal subunit protein uL2 (287 aa).

A disordered region spans residues 221-287 (RGSVMNPCDH…SKRSRGGRDS (67 aa)). Positions 258 to 287 (KTRKRNKPSNRFVLRKRRRTSKRSRGGRDS) are enriched in basic residues.

The protein belongs to the universal ribosomal protein uL2 family. As to quaternary structure, part of the 50S ribosomal subunit. Forms a bridge to the 30S subunit in the 70S ribosome.

In terms of biological role, one of the primary rRNA binding proteins. Required for association of the 30S and 50S subunits to form the 70S ribosome, for tRNA binding and peptide bond formation. It has been suggested to have peptidyltransferase activity; this is somewhat controversial. Makes several contacts with the 16S rRNA in the 70S ribosome. The protein is Large ribosomal subunit protein uL2 of Prochlorococcus marinus (strain MIT 9313).